We begin with the raw amino-acid sequence, 170 residues long: Alpha-crystallin A chain (170 aa).

Residue methionine 1 is modified to N-acetylmethionine. A required for complex formation with BFSP1 and BFSP2 region spans residues 1–63 (MDVTIQHPWF…RTALDSGISE (63 aa)). Glutamine 6 is subject to Deamidated glutamine; partial. Serine 45 carries the post-translational modification Phosphoserine. At glutamine 50 the chain carries Deamidated glutamine; partial. Positions 52-161 (LFRTALDSGI…GERTIPVSRE (110 aa)) constitute a sHSP domain. Position 99 is an N6-acetyllysine (lysine 99). Residue histidine 100 participates in Zn(2+) binding. Asparagine 101 bears the Deamidated asparagine; partial mark. Residues glutamate 102, histidine 107, and histidine 151 each contribute to the Zn(2+) site. The segment at 144 to 170 (PKLVDPSHGERTIPVSREEKPSSAPSS) is disordered. Positions 148–164 (DPSHGERTIPVSREEKP) are enriched in basic and acidic residues. An O-linked (GlcNAc) serine glycan is attached at serine 159.

It belongs to the small heat shock protein (HSP20) family. As to quaternary structure, heteromer composed of three CRYAA and one CRYAB subunits. Inter-subunit bridging via zinc ions enhances stability, which is crucial as there is no protein turn over in the lens. Can also form homodimers and homotetramers (dimers of dimers) which serve as the building blocks of homooligomers. Within homooligomers, the zinc-binding motif is created from residues of 3 different molecules. His-100 and Glu-102 from one molecule are ligands of the zinc ion, and His-107 and His-151 residues from additional molecules complete the site with tetrahedral coordination geometry. Part of a complex required for lens intermediate filament formation composed of BFSP1, BFSP2 and CRYAA. In terms of processing, acetylation at Lys-99 may increase chaperone activity. Post-translationally, undergoes age-dependent proteolytical cleavage at the C-terminus.

It localises to the cytoplasm. It is found in the nucleus. In terms of biological role, contributes to the transparency and refractive index of the lens. Acts as a chaperone, preventing aggregation of various proteins under a wide range of stress conditions. Required for the correct formation of lens intermediate filaments as part of a complex composed of BFSP1, BFSP2 and CRYAA. This is Alpha-crystallin A chain (CRYAA) from Tamandua mexicana (Northern Tamandua).